The chain runs to 264 residues: NAD kinase 1 (264 aa).

Aspartate 45 functions as the Proton acceptor in the catalytic mechanism. Residues 45–46 (DG), 122–123 (NE), arginine 148, aspartate 150, 161–166 (TAYNKS), and alanine 185 each bind NAD(+).

This sequence belongs to the NAD kinase family. It depends on a divalent metal cation as a cofactor.

The protein localises to the cytoplasm. The enzyme catalyses NAD(+) + ATP = ADP + NADP(+) + H(+). Functionally, involved in the regulation of the intracellular balance of NAD and NADP, and is a key enzyme in the biosynthesis of NADP. Catalyzes specifically the phosphorylation on 2'-hydroxyl of the adenosine moiety of NAD to yield NADP. The polypeptide is NAD kinase 1 (Listeria monocytogenes serotype 4b (strain F2365)).